The sequence spans 425 residues: uncharacterized protein (425 aa).

In terms of domain architecture, TRAM spans 1 to 57 (MKDKPLKLTVEKLVYGGYGFSRLNGKAVFVRFASPKELVEAKVVKEKKDYTEAVVTK). Positions 70, 76, 79, and 153 each coordinate [4Fe-4S] cluster. The S-adenosyl-L-methionine site is built by Gln-260, Asp-308, and Asp-354. Cys-381 serves as the catalytic Nucleophile.

It belongs to the class I-like SAM-binding methyltransferase superfamily. RNA M5U methyltransferase family.

This is an uncharacterized protein from Aquifex aeolicus (strain VF5).